The following is a 559-amino-acid chain: Formate--tetrahydrofolate ligase (559 aa).

Residue 68–75 coordinates ATP; it reads TPAGEGKT.

This sequence belongs to the formate--tetrahydrofolate ligase family.

It catalyses the reaction (6S)-5,6,7,8-tetrahydrofolate + formate + ATP = (6R)-10-formyltetrahydrofolate + ADP + phosphate. Its pathway is one-carbon metabolism; tetrahydrofolate interconversion. The chain is Formate--tetrahydrofolate ligase from Mesorhizobium japonicum (strain LMG 29417 / CECT 9101 / MAFF 303099) (Mesorhizobium loti (strain MAFF 303099)).